Consider the following 172-residue polypeptide: uncharacterized protein (172 aa).

4 helical membrane-spanning segments follow: residues 20-40, 48-68, 76-96, and 146-166; these read LVLITISIIALSTAYIAEYIF, CVYERFPYLMLIKISLTALII, LILILITILSSCILSTYHSFV, and MTEYNLLLNICLLIFLGLILF.

It localises to the cell membrane. This is an uncharacterized protein from Rickettsia prowazekii (strain Madrid E).